The primary structure comprises 217 residues: Cytidylate kinase (217 aa).

Residue G11–T19 participates in ATP binding.

Belongs to the cytidylate kinase family. Type 1 subfamily.

Its subcellular location is the cytoplasm. The catalysed reaction is CMP + ATP = CDP + ADP. The enzyme catalyses dCMP + ATP = dCDP + ADP. The chain is Cytidylate kinase from Clostridium perfringens (strain ATCC 13124 / DSM 756 / JCM 1290 / NCIMB 6125 / NCTC 8237 / Type A).